An 847-amino-acid chain; its full sequence is Glucans biosynthesis glucosyltransferase H (847 aa).

Residues 1 to 138 lie on the Cytoplasmic side of the membrane; the sequence is MNKTTEYIDA…KWRTVGTIRR (138 aa). Residues 139 to 156 traverse the membrane as a helical segment; it reads YILLILTLAQTVVATWYM. Residues 157-193 lie on the Periplasmic side of the membrane; the sequence is KTILPYQGWALINPMDMVGQDIWVSFMQLLPYMLQTG. Residues 194–216 form a helical membrane-spanning segment; it reads ILILFAVLFCWVSAGFWTALMGF. At 217 to 511 the chain is on the cytoplasmic side; that stretch reads LQLLIGRDKY…LVKGMHPVHR (295 aa). Residues 512 to 534 traverse the membrane as a helical segment; it reads AVFLTGVMSYLSAPLWFMFLALS. Residues 535 to 567 are Periplasmic-facing; the sequence is TALQVVHALTEPQYFLQPRQLFPVWPQWRPELA. Residues 568–590 form a helical membrane-spanning segment; sequence IALFASTMVLLFLPKLLSIMLIW. Residues 591 to 602 lie on the Cytoplasmic side of the membrane; sequence CKGTKEYGGFWR. A helical transmembrane segment spans residues 603–625; that stretch reads VTLSLLLEVLFSVLLAPVRMLFH. Residues 626–679 lie on the Periplasmic side of the membrane; that stretch reads TVFVVSAFLGWEVVWNSPQRDDDSTPWGEAFMRHGSQLLLGLVWAVGMAWLDLR. Residues 680 to 702 form a helical membrane-spanning segment; sequence FLFWLAPIVFSLILSPFVSVISS. Topologically, residues 703-847 are cytoplasmic; that stretch reads RSTVGLRTKR…ALQGRTSSAG (145 aa).

This sequence belongs to the glycosyltransferase 2 family. OpgH subfamily.

It is found in the cell inner membrane. It functions in the pathway glycan metabolism; osmoregulated periplasmic glucan (OPG) biosynthesis. In terms of biological role, involved in the biosynthesis of osmoregulated periplasmic glucans (OPGs). The protein is Glucans biosynthesis glucosyltransferase H of Salmonella typhi.